Here is a 555-residue protein sequence, read N- to C-terminus: Formate--tetrahydrofolate ligase (555 aa).

Position 63 to 70 (63 to 70 (TPAGEGKT)) interacts with ATP.

It belongs to the formate--tetrahydrofolate ligase family.

The enzyme catalyses (6S)-5,6,7,8-tetrahydrofolate + formate + ATP = (6R)-10-formyltetrahydrofolate + ADP + phosphate. It functions in the pathway one-carbon metabolism; tetrahydrofolate interconversion. The protein is Formate--tetrahydrofolate ligase of Beijerinckia indica subsp. indica (strain ATCC 9039 / DSM 1715 / NCIMB 8712).